We begin with the raw amino-acid sequence, 779 residues long: Endonuclease MutS2 (779 aa).

328 to 335 contacts ATP; the sequence is GPNTGGKT. The Smr domain occupies 704–779; that stretch reads LDLRGKRYEE…GSGATIVTLG (76 aa).

It belongs to the DNA mismatch repair MutS family. MutS2 subfamily. Homodimer. Binds to stalled ribosomes, contacting rRNA.

Its function is as follows. Endonuclease that is involved in the suppression of homologous recombination and thus may have a key role in the control of bacterial genetic diversity. In terms of biological role, acts as a ribosome collision sensor, splitting the ribosome into its 2 subunits. Detects stalled/collided 70S ribosomes which it binds and splits by an ATP-hydrolysis driven conformational change. Acts upstream of the ribosome quality control system (RQC), a ribosome-associated complex that mediates the extraction of incompletely synthesized nascent chains from stalled ribosomes and their subsequent degradation. Probably generates substrates for RQC. This Streptococcus pyogenes serotype M49 (strain NZ131) protein is Endonuclease MutS2.